We begin with the raw amino-acid sequence, 42 residues long: Lebocin-like anionic peptide 1 (42 aa).

In terms of tissue distribution, hemolymph.

The protein localises to the secreted. Antimicrobial protein. Has antibacterial activity against the Gram-positive bacteria M.luteus (MIC=22.7 uM) and L.monocytogenes (MIC=90.9 uM). Lacks antibacterial activity against the Gram-positive bacteria B.circulans, S.aureus, and S.lutea, and the Gram-negative bacteria E.coli D31, E.coli ATCC 25922, and S.typhimurium. Has antifungal activity against A.niger (MIC=90.9 uM) and T.harzianum (MIC=90.9 uM), but lacks antifungal activity against S.cerevisiae, P.pastoris, Z.marxianus, C.albicans, C.fructus, and F.oxysporum. The protein is Lebocin-like anionic peptide 1 of Galleria mellonella (Greater wax moth).